Reading from the N-terminus, the 371-residue chain is MSRRERYSVEPIPNDANEFQDNVSFIHKFITNWLITDPSLRNPGSEKNVKAKNYQVQKHENVQFIYLCGGRLRSVKQKPINVVTGISILIPGILFWIFEAKWIWFHVNPSIVILFSYFWLITVSFFIKASMSDPGMLPRNIHVPYSISNANTSPKASPPDEYFNIISLPYNAEDHTGVGLKYCATCHIWRSPRASHCSVCNSCIISHDHHCVFLNNCIGYRNYKYFLWFLLFAVLGCILMSVISFIHVFYYRLGMETSVSTFRSSISKYPVSFLLCIYSLLALVYPFPLLIFHIFLTSYNLTTREYFNNVRGVKNSQNHFTNHFDTHSIFKNLYINWLGRARGFSLVRQTDSYQIGDLRFEKLDPLQSFSS.

The Cytoplasmic portion of the chain corresponds to Met-1–Pro-79. The chain crosses the membrane as a helical span at residues Ile-80–Ala-100. At Lys-101 to His-106 the chain is on the lumenal side. A helical transmembrane segment spans residues Val-107–Ile-127. Residues Lys-128–Tyr-225 lie on the Cytoplasmic side of the membrane. One can recognise a DHHC domain in the interval Lys-181 to Leu-231. The active-site S-palmitoyl cysteine intermediate is the Cys-211. Residues Phe-226–Ile-246 form a helical membrane-spanning segment. At His-247–Leu-274 the chain is on the lumenal side. The chain crosses the membrane as a helical span at residues Leu-275–Phe-295. Residues Leu-296–Ser-371 are Cytoplasmic-facing.

This sequence belongs to the DHHC palmitoyltransferase family. ERF2/ZDHHC9 subfamily. As to quaternary structure, interacts with ERF4. In terms of processing, autopalmitoylated.

It is found in the endoplasmic reticulum membrane. It catalyses the reaction L-cysteinyl-[protein] + hexadecanoyl-CoA = S-hexadecanoyl-L-cysteinyl-[protein] + CoA. In terms of biological role, the ERF2-ERF4 complex is a palmitoyltransferase specific for Ras proteins. This Debaryomyces hansenii (strain ATCC 36239 / CBS 767 / BCRC 21394 / JCM 1990 / NBRC 0083 / IGC 2968) (Yeast) protein is Palmitoyltransferase ERF2 (ERF2).